A 197-amino-acid chain; its full sequence is uncharacterized protein (197 aa).

One can recognise an SIS domain in the interval M33–K184.

The protein belongs to the SIS family. PHI subfamily.

This is an uncharacterized protein from Methanothermobacter thermautotrophicus (strain ATCC 29096 / DSM 1053 / JCM 10044 / NBRC 100330 / Delta H) (Methanobacterium thermoautotrophicum).